The primary structure comprises 282 residues: Large ribosomal subunit protein uL2 (282 aa).

Residues 215–282 (RHKGIRPTVR…IIRSRKETKK (68 aa)) form a disordered region. Basic residues predominate over residues 263 to 282 (RNPKKPSTKLIIRSRKETKK).

This sequence belongs to the universal ribosomal protein uL2 family. As to quaternary structure, part of the 50S ribosomal subunit. Forms a bridge to the 30S subunit in the 70S ribosome.

Its function is as follows. One of the primary rRNA binding proteins. Required for association of the 30S and 50S subunits to form the 70S ribosome, for tRNA binding and peptide bond formation. It has been suggested to have peptidyltransferase activity; this is somewhat controversial. Makes several contacts with the 16S rRNA in the 70S ribosome. The chain is Large ribosomal subunit protein uL2 from Mesomycoplasma hyopneumoniae (strain 7448) (Mycoplasma hyopneumoniae).